The primary structure comprises 400 residues: WD repeat and FYVE domain-containing protein 2 (400 aa).

WD repeat units follow at residues 22–61 (GSQE…QYWP), 66–105 (AMPS…NKMT), 112–150 (AHQS…QRLG), 153–192 (RTSA…CTLL), 197–236 (GHTG…GTAI), and 240–279 (GHND…QETP). The FYVE-type zinc-finger motif lies at 281–352 (WLDSDSCQKC…VCDSCHEAIT (72 aa)). Residues Cys-287, Cys-290, Cys-314, Cys-317, Cys-322, Cys-325, Cys-344, and Cys-347 each coordinate Zn(2+). A WD 7 repeat occupies 364–399 (DSKHNIVHVHFDATRGWLLTSGTDKVIKLWDMTPVV).

As to quaternary structure, homodimer. Interacts (via WD repeats 1-3) with AKT1, AKT2, PRKCZ and PRKCI. Interacts with VAMP2. Forms a complex with VAMP2 and PRKCZ. Interacts with FOXO1. Forms a complex with AKT1 and FOXO1. As to expression, highly expressed in the brain (at protein level).

The protein localises to the endosome. It is found in the early endosome. It localises to the cytoplasm. Functionally, acts in an adapter protein-like fashion to mediate the interaction between the kinase PRKCZ and its substrate VAMP2 and increases the PRKCZ-dependent phosphorylation of VAMP2. Positively regulates adipocyte differentiation, by facilitating the phosphorylation and thus inactivation of the anti-adipogenetic transcription factor FOXO1 by the kinase AKT1. Plays a role in endosomal control of AKT2 signaling; required for insulin-stimulated AKT2 phosphorylation and glucose uptake and insulin-stimulated phosphorylation of AKT2 substrates. Participates in transferrin receptor endocytosis. The chain is WD repeat and FYVE domain-containing protein 2 (Wdfy2) from Mus musculus (Mouse).